We begin with the raw amino-acid sequence, 285 residues long: Bifunctional protein FolD (285 aa).

Residues 164–166, Ser189, and Ile230 contribute to the NADP(+) site; that span reads GRS.

This sequence belongs to the tetrahydrofolate dehydrogenase/cyclohydrolase family. Homodimer.

It catalyses the reaction (6R)-5,10-methylene-5,6,7,8-tetrahydrofolate + NADP(+) = (6R)-5,10-methenyltetrahydrofolate + NADPH. The catalysed reaction is (6R)-5,10-methenyltetrahydrofolate + H2O = (6R)-10-formyltetrahydrofolate + H(+). It functions in the pathway one-carbon metabolism; tetrahydrofolate interconversion. Functionally, catalyzes the oxidation of 5,10-methylenetetrahydrofolate to 5,10-methenyltetrahydrofolate and then the hydrolysis of 5,10-methenyltetrahydrofolate to 10-formyltetrahydrofolate. This chain is Bifunctional protein FolD, found in Oceanobacillus iheyensis (strain DSM 14371 / CIP 107618 / JCM 11309 / KCTC 3954 / HTE831).